Reading from the N-terminus, the 242-residue chain is Uridylate kinase (242 aa).

16–19 (KISG) contributes to the ATP binding site. Residues 24–29 (GDQGFG) form an involved in allosteric activation by GTP region. G58 is a binding site for UMP. ATP-binding residues include G59 and R63. UMP is bound by residues D78 and 139-146 (TGNPYFTT). Positions 166, 172, and 175 each coordinate ATP.

Belongs to the UMP kinase family. As to quaternary structure, homohexamer.

The protein resides in the cytoplasm. It catalyses the reaction UMP + ATP = UDP + ADP. It functions in the pathway pyrimidine metabolism; CTP biosynthesis via de novo pathway; UDP from UMP (UMPK route): step 1/1. With respect to regulation, allosterically activated by GTP. Inhibited by UTP. In terms of biological role, catalyzes the reversible phosphorylation of UMP to UDP. The polypeptide is Uridylate kinase (Roseobacter denitrificans (strain ATCC 33942 / OCh 114) (Erythrobacter sp. (strain OCh 114))).